Consider the following 296-residue polypeptide: Homoserine kinase (296 aa).

84–94 (PLARGLGSSSS) serves as a coordination point for ATP.

This sequence belongs to the GHMP kinase family. Homoserine kinase subfamily.

Its subcellular location is the cytoplasm. The catalysed reaction is L-homoserine + ATP = O-phospho-L-homoserine + ADP + H(+). It functions in the pathway amino-acid biosynthesis; L-threonine biosynthesis; L-threonine from L-aspartate: step 4/5. In terms of biological role, catalyzes the ATP-dependent phosphorylation of L-homoserine to L-homoserine phosphate. This Lactococcus lactis subsp. cremoris (Streptococcus cremoris) protein is Homoserine kinase (thrB).